The primary structure comprises 217 residues: Large ribosomal subunit protein uL1 (217 aa).

It belongs to the universal ribosomal protein uL1 family. In terms of assembly, component of the large ribosomal subunit (LSU). Mature ribosomes consist of a small (40S) and a large (60S) subunit. The 40S subunit contains about 32 different proteins and 1 molecule of RNA (18S). The 60S subunit contains 45 different proteins and 3 molecules of RNA (25S, 5.8S and 5S). uL1 forms part of the L1 stalk.

It localises to the cytoplasm. Its function is as follows. Component of the ribosome, a large ribonucleoprotein complex responsible for the synthesis of proteins in the cell. The small ribosomal subunit (SSU) binds messenger RNAs (mRNAs) and translates the encoded message by selecting cognate aminoacyl-transfer RNA (tRNA) molecules. The large subunit (LSU) contains the ribosomal catalytic site termed the peptidyl transferase center (PTC), which catalyzes the formation of peptide bonds, thereby polymerizing the amino acids delivered by tRNAs into a polypeptide chain. The nascent polypeptides leave the ribosome through a tunnel in the LSU and interact with protein factors that function in enzymatic processing, targeting, and the membrane insertion of nascent chains at the exit of the ribosomal tunnel. uL1 forms part of the L1 stalk, a mobile element that plays a role in evacuating the exit-site tRNA. This is Large ribosomal subunit protein uL1 (RPL10A) from Candida albicans (strain SC5314 / ATCC MYA-2876) (Yeast).